Here is a 393-residue protein sequence, read N- to C-terminus: Formate-dependent phosphoribosylglycinamide formyltransferase (393 aa).

Residues 22-23 and Glu-82 each bind N(1)-(5-phospho-beta-D-ribosyl)glycinamide; that span reads EL. ATP contacts are provided by residues Arg-114, Lys-155, 160 to 165, 195 to 198, and Glu-203; these read SSGKGQ and EGLV. Positions 119 to 308 constitute an ATP-grasp domain; it reads RLAAETLQLP…EFALHVRAFL (190 aa). The Mg(2+) site is built by Glu-267 and Glu-279. N(1)-(5-phospho-beta-D-ribosyl)glycinamide is bound by residues Asp-286, Lys-355, and 362 to 363; that span reads RR.

The protein belongs to the PurK/PurT family. In terms of assembly, homodimer.

It catalyses the reaction N(1)-(5-phospho-beta-D-ribosyl)glycinamide + formate + ATP = N(2)-formyl-N(1)-(5-phospho-beta-D-ribosyl)glycinamide + ADP + phosphate + H(+). Its pathway is purine metabolism; IMP biosynthesis via de novo pathway; N(2)-formyl-N(1)-(5-phospho-D-ribosyl)glycinamide from N(1)-(5-phospho-D-ribosyl)glycinamide (formate route): step 1/1. Functionally, involved in the de novo purine biosynthesis. Catalyzes the transfer of formate to 5-phospho-ribosyl-glycinamide (GAR), producing 5-phospho-ribosyl-N-formylglycinamide (FGAR). Formate is provided by PurU via hydrolysis of 10-formyl-tetrahydrofolate. The polypeptide is Formate-dependent phosphoribosylglycinamide formyltransferase (Yersinia pseudotuberculosis serotype O:3 (strain YPIII)).